Consider the following 254-residue polypeptide: 3-deoxy-manno-octulosonate cytidylyltransferase (254 aa).

It belongs to the KdsB family.

Its subcellular location is the cytoplasm. The catalysed reaction is 3-deoxy-alpha-D-manno-oct-2-ulosonate + CTP = CMP-3-deoxy-beta-D-manno-octulosonate + diphosphate. It functions in the pathway nucleotide-sugar biosynthesis; CMP-3-deoxy-D-manno-octulosonate biosynthesis; CMP-3-deoxy-D-manno-octulosonate from 3-deoxy-D-manno-octulosonate and CTP: step 1/1. It participates in bacterial outer membrane biogenesis; lipopolysaccharide biosynthesis. Functionally, activates KDO (a required 8-carbon sugar) for incorporation into bacterial lipopolysaccharide in Gram-negative bacteria. The chain is 3-deoxy-manno-octulosonate cytidylyltransferase from Geobacter metallireducens (strain ATCC 53774 / DSM 7210 / GS-15).